A 488-amino-acid polypeptide reads, in one-letter code: Glutamate--tRNA ligase (488 aa).

A 'HIGH' region motif is present at residues 11–21 (PSPTGQIHIGN). Zn(2+) is bound by residues Cys108, Cys110, Cys135, and Asp137. The 'KMSKS' region motif lies at 252–256 (KLSKR). Lys255 contributes to the ATP binding site.

Belongs to the class-I aminoacyl-tRNA synthetase family. Glutamate--tRNA ligase type 1 subfamily. In terms of assembly, monomer. It depends on Zn(2+) as a cofactor.

Its subcellular location is the cytoplasm. It catalyses the reaction tRNA(Glu) + L-glutamate + ATP = L-glutamyl-tRNA(Glu) + AMP + diphosphate. Catalyzes the attachment of glutamate to tRNA(Glu) in a two-step reaction: glutamate is first activated by ATP to form Glu-AMP and then transferred to the acceptor end of tRNA(Glu). The polypeptide is Glutamate--tRNA ligase (Natranaerobius thermophilus (strain ATCC BAA-1301 / DSM 18059 / JW/NM-WN-LF)).